The following is a 567-amino-acid chain: Urease subunit alpha 1 (567 aa).

Positions 128–567 (GAVDTHVHYI…LPLAQLYHLF (440 aa)) constitute a Urease domain. Ni(2+) contacts are provided by H133, H135, and K216. K216 bears the N6-carboxylysine mark. A substrate-binding site is contributed by H218. The Ni(2+) site is built by H245 and H271. Catalysis depends on H319, which acts as the Proton donor. D359 provides a ligand contact to Ni(2+).

It belongs to the metallo-dependent hydrolases superfamily. Urease alpha subunit family. As to quaternary structure, heterotrimer of UreA (gamma), UreB (beta) and UreC (alpha) subunits. Three heterotrimers associate to form the active enzyme. Ni cation serves as cofactor. Post-translationally, carboxylation allows a single lysine to coordinate two nickel ions.

The protein resides in the cytoplasm. The enzyme catalyses urea + 2 H2O + H(+) = hydrogencarbonate + 2 NH4(+). The protein operates within nitrogen metabolism; urea degradation; CO(2) and NH(3) from urea (urease route): step 1/1. This Psychrobacter cryohalolentis (strain ATCC BAA-1226 / DSM 17306 / VKM B-2378 / K5) protein is Urease subunit alpha 1.